The following is a 63-amino-acid chain: Sec-independent protein translocase protein TatA (63 aa).

Residues 1–21 (MGSLSMWHWLIVLVIVLLLFG) traverse the membrane as a helical segment. The disordered stretch occupies residues 43-63 (MTDEDAPETAKTVDHKADETK). Residues 53–63 (KTVDHKADETK) show a composition bias toward basic and acidic residues.

It belongs to the TatA/E family. As to quaternary structure, the Tat system comprises two distinct complexes: a TatABC complex, containing multiple copies of TatA, TatB and TatC subunits, and a separate TatA complex, containing only TatA subunits. Substrates initially bind to the TatABC complex, which probably triggers association of the separate TatA complex to form the active translocon.

The protein localises to the cell inner membrane. In terms of biological role, part of the twin-arginine translocation (Tat) system that transports large folded proteins containing a characteristic twin-arginine motif in their signal peptide across membranes. TatA could form the protein-conducting channel of the Tat system. The chain is Sec-independent protein translocase protein TatA from Rhizobium etli (strain ATCC 51251 / DSM 11541 / JCM 21823 / NBRC 15573 / CFN 42).